We begin with the raw amino-acid sequence, 209 residues long: Uracil phosphoribosyltransferase (209 aa).

Residues Arg-79, Arg-104, and 131 to 139 contribute to the 5-phospho-alpha-D-ribose 1-diphosphate site; that span reads DPMLATGAS. Uracil-binding positions include Ile-194 and 199–201; that span reads GDA. Position 200 (Asp-200) interacts with 5-phospho-alpha-D-ribose 1-diphosphate.

The protein belongs to the UPRTase family. It depends on Mg(2+) as a cofactor.

It catalyses the reaction UMP + diphosphate = 5-phospho-alpha-D-ribose 1-diphosphate + uracil. It functions in the pathway pyrimidine metabolism; UMP biosynthesis via salvage pathway; UMP from uracil: step 1/1. Allosterically activated by GTP. In terms of biological role, catalyzes the conversion of uracil and 5-phospho-alpha-D-ribose 1-diphosphate (PRPP) to UMP and diphosphate. The chain is Uracil phosphoribosyltransferase from Staphylococcus haemolyticus (strain JCSC1435).